The primary structure comprises 103 residues: Large ribosomal subunit protein bL21 (103 aa).

This sequence belongs to the bacterial ribosomal protein bL21 family. In terms of assembly, part of the 50S ribosomal subunit. Contacts protein L20.

This protein binds to 23S rRNA in the presence of protein L20. In Shewanella loihica (strain ATCC BAA-1088 / PV-4), this protein is Large ribosomal subunit protein bL21.